The primary structure comprises 95 residues: Small ribosomal subunit protein uS19 (95 aa).

Residues 73–95 (EFSPTRTYRGHGADKNAKGSKKK) are disordered.

This sequence belongs to the universal ribosomal protein uS19 family.

Functionally, protein S19 forms a complex with S13 that binds strongly to the 16S ribosomal RNA. The chain is Small ribosomal subunit protein uS19 from Deinococcus geothermalis (strain DSM 11300 / CIP 105573 / AG-3a).